The chain runs to 496 residues: Angiopoietin-2 (496 aa).

A signal peptide spans 1 to 18; sequence MWQLVFFALSCDLVLAAA. N-linked (GlcNAc...) asparagine glycosylation is found at N89, N119, N133, N151, N240, and N304. Positions 130 to 255 form a coiled coil; sequence NLLNQTAEQT…KQQHDLMETV (126 aa). Positions 275-495 constitute a Fibrinogen C-terminal domain; sequence KEEQIIFRDC…ATTMMIRPAD (221 aa). A disulfide bridge links C284 with C313. Ca(2+) contacts are provided by D429, D431, C433, and C435. Disulfide bonds link C433–C435 and C437–C450.

Interacts with TEK/TIE2, competing for the same binding site as ANGPT1. Interacts with ITGA5. Interacts with SVEP1/polydom. Interacts with THBD; this interaction significantly inhibits the generation of activated PC and TAFIa/CPB2 by the thrombin/thrombomodulin complex.

The protein localises to the secreted. Its function is as follows. Binds to TEK/TIE2, competing for the ANGPT1 binding site, and modulating ANGPT1 signaling. Can induce tyrosine phosphorylation of TEK/TIE2 in the absence of ANGPT1. In the absence of angiogenic inducers, such as VEGF, ANGPT2-mediated loosening of cell-matrix contacts may induce endothelial cell apoptosis with consequent vascular regression. In concert with VEGF, it may facilitate endothelial cell migration and proliferation, thus serving as a permissive angiogenic signal. Involved in the regulation of lymphangiogenesis. The sequence is that of Angiopoietin-2 (ANGPT2) from Sus scrofa (Pig).